The primary structure comprises 714 residues: Methyl-accepting chemotaxis protein TlpQ (714 aa).

The helical transmembrane segment at 12–32 (ITLLAGLCLLGVVALLVGLSV) threads the bilayer. One can recognise a Cache domain in the interval 50-290 (LDESARLRLE…LLGKNLAKAD (241 aa)). Histamine is bound by residues glutamate 170, 208–210 (YFD), and aspartate 239. Residues 360-380 (TWVELGLGLGAAVLGLLVLWL) form a helical membrane-spanning segment. An HAMP domain is found at 383–437 (RGVTRPILGVAHMLRDIASGEGDLTQRLPHTGRDELGELAGWFNRFLDKLQPIIR). A Methyl-accepting transducer domain is found at 442–678 (SVRDARSTAD…EINRNVAAIR (237 aa)).

It belongs to the methyl-accepting chemotaxis (MCP) protein family. As to quaternary structure, homotetramer.

It is found in the cell membrane. Functionally, chemotactic-signal transducers respond to changes in the concentration of attractants and repellents in the environment, transduce a signal from the outside to the inside of the cell, and facilitate sensory adaptation through the variation of the level of methylation. TlpQ is a chemoreceptor that binds and mediates chemotaxis to histamine, a key biological signaling molecule. It binds histamine with high affinity, which permits responses to very low histamine concentrations. Chemotaxis to histamine may play a role in the virulence of P.aeruginosa by recruiting cells at the infection site and consequently modulating the expression of quorum-sensing-dependent virulence genes. TlpQ also binds and mediates chemotaxis to polyamines such as putrescine, spermidine, cadaverine, agmatine and ethylenediamine. In addition, binds the quorum-sensing signal autoinducer 2 (AI-2), thus inducing chemotaxis toward AI-2 and biofilm formation. The chain is Methyl-accepting chemotaxis protein TlpQ from Pseudomonas aeruginosa (strain ATCC 15692 / DSM 22644 / CIP 104116 / JCM 14847 / LMG 12228 / 1C / PRS 101 / PAO1).